Here is a 162-residue protein sequence, read N- to C-terminus: MSQEEIKDLTLLGNQKTNYNFDYDLNILEAFDNRHQDNDYFIKFNCPEFTSLCPITGQPDFATIYLSYIPDKKCVESKSLKLYLFSYRNHGDFHENCINTIGKDLVDLLQPRYLEVWGKFTPRGGISIDPYYNYGRPNTKYEEMAAYRLMNHDLYPETIDNR.

The Thioimide intermediate role is filled by cysteine 53. The Proton donor role is filled by aspartate 60. Substrate is bound by residues 75-77 (VES) and 94-95 (HE).

It belongs to the GTP cyclohydrolase I family. QueF type 1 subfamily.

The protein localises to the cytoplasm. It catalyses the reaction 7-aminomethyl-7-carbaguanine + 2 NADP(+) = 7-cyano-7-deazaguanine + 2 NADPH + 3 H(+). It participates in tRNA modification; tRNA-queuosine biosynthesis. In terms of biological role, catalyzes the NADPH-dependent reduction of 7-cyano-7-deazaguanine (preQ0) to 7-aminomethyl-7-deazaguanine (preQ1). In Streptococcus mutans serotype c (strain ATCC 700610 / UA159), this protein is NADPH-dependent 7-cyano-7-deazaguanine reductase.